We begin with the raw amino-acid sequence, 161 residues long: Nucleotide-binding protein Sden_0770 (161 aa).

This sequence belongs to the YajQ family.

Its function is as follows. Nucleotide-binding protein. In Shewanella denitrificans (strain OS217 / ATCC BAA-1090 / DSM 15013), this protein is Nucleotide-binding protein Sden_0770.